Here is a 500-residue protein sequence, read N- to C-terminus: Glycerol kinase (500 aa).

Threonine 14 is an ADP binding site. Threonine 14, threonine 15, and serine 16 together coordinate ATP. Residue threonine 14 coordinates sn-glycerol 3-phosphate. Arginine 18 serves as a coordination point for ADP. 3 residues coordinate sn-glycerol 3-phosphate: arginine 84, glutamate 85, and tyrosine 136. Glycerol contacts are provided by arginine 84, glutamate 85, and tyrosine 136. Histidine 232 is subject to Phosphohistidine; by HPr. Aspartate 246 provides a ligand contact to sn-glycerol 3-phosphate. Glycerol is bound by residues aspartate 246 and glutamine 247. The ADP site is built by threonine 268 and glycine 311. ATP is bound by residues threonine 268, glycine 311, glutamine 315, and glycine 412. Glycine 412 and asparagine 416 together coordinate ADP.

It belongs to the FGGY kinase family. Homotetramer and homodimer (in equilibrium). In terms of processing, the phosphoenolpyruvate-dependent sugar phosphotransferase system (PTS), including enzyme I, and histidine-containing protein (HPr) are required for the phosphorylation, which leads to the activation of the enzyme.

The catalysed reaction is glycerol + ATP = sn-glycerol 3-phosphate + ADP + H(+). It participates in polyol metabolism; glycerol degradation via glycerol kinase pathway; sn-glycerol 3-phosphate from glycerol: step 1/1. With respect to regulation, activated by phosphorylation and inhibited by fructose 1,6-bisphosphate (FBP). Functionally, key enzyme in the regulation of glycerol uptake and metabolism. Catalyzes the phosphorylation of glycerol to yield sn-glycerol 3-phosphate. This chain is Glycerol kinase, found in Streptococcus uberis (strain ATCC BAA-854 / 0140J).